We begin with the raw amino-acid sequence, 222 residues long: Endonuclease V (222 aa).

The Mg(2+) site is built by D34 and D102.

Belongs to the endonuclease V family. Mg(2+) is required as a cofactor.

Its subcellular location is the cytoplasm. It carries out the reaction Endonucleolytic cleavage at apurinic or apyrimidinic sites to products with a 5'-phosphate.. DNA repair enzyme involved in the repair of deaminated bases. Selectively cleaves double-stranded DNA at the second phosphodiester bond 3' to a deoxyinosine leaving behind the intact lesion on the nicked DNA. This chain is Endonuclease V, found in Proteus mirabilis (strain HI4320).